Consider the following 362-residue polypeptide: Dihydroorotate dehydrogenase (quinone) (362 aa).

Residues 62-66 (AGYDK) and threonine 86 each bind FMN. Lysine 66 lines the substrate pocket. Position 111 to 115 (111 to 115 (NRLGF)) interacts with substrate. Residues asparagine 139 and asparagine 170 each coordinate FMN. Asparagine 170 is a binding site for substrate. Residue serine 173 is the Nucleophile of the active site. Residue asparagine 175 participates in substrate binding. 2 residues coordinate FMN: lysine 215 and serine 243. Substrate is bound at residue 244-245 (NT). FMN contacts are provided by residues glycine 266, glycine 295, and 316–317 (YS).

The protein belongs to the dihydroorotate dehydrogenase family. Type 2 subfamily. As to quaternary structure, monomer. Requires FMN as cofactor.

It localises to the cell membrane. It catalyses the reaction (S)-dihydroorotate + a quinone = orotate + a quinol. It participates in pyrimidine metabolism; UMP biosynthesis via de novo pathway; orotate from (S)-dihydroorotate (quinone route): step 1/1. Its function is as follows. Catalyzes the conversion of dihydroorotate to orotate with quinone as electron acceptor. The sequence is that of Dihydroorotate dehydrogenase (quinone) from Rhizobium etli (strain CIAT 652).